A 381-amino-acid polypeptide reads, in one-letter code: 1-deoxy-D-xylulose 5-phosphate reductoisomerase (381 aa).

NADPH-binding residues include G13, S14, I15, N40, and N114. K115 contributes to the 1-deoxy-D-xylulose 5-phosphate binding site. Residue E116 participates in NADPH binding. D140 is a Mn(2+) binding site. Residues S141, E142, S166, and H189 each contribute to the 1-deoxy-D-xylulose 5-phosphate site. E142 is a binding site for Mn(2+). G195 is a binding site for NADPH. S202, N207, K208, and E211 together coordinate 1-deoxy-D-xylulose 5-phosphate. E211 contributes to the Mn(2+) binding site.

It belongs to the DXR family. Mg(2+) is required as a cofactor. The cofactor is Mn(2+).

The catalysed reaction is 2-C-methyl-D-erythritol 4-phosphate + NADP(+) = 1-deoxy-D-xylulose 5-phosphate + NADPH + H(+). The protein operates within isoprenoid biosynthesis; isopentenyl diphosphate biosynthesis via DXP pathway; isopentenyl diphosphate from 1-deoxy-D-xylulose 5-phosphate: step 1/6. Catalyzes the NADPH-dependent rearrangement and reduction of 1-deoxy-D-xylulose-5-phosphate (DXP) to 2-C-methyl-D-erythritol 4-phosphate (MEP). This chain is 1-deoxy-D-xylulose 5-phosphate reductoisomerase, found in Treponema denticola (strain ATCC 35405 / DSM 14222 / CIP 103919 / JCM 8153 / KCTC 15104).